The chain runs to 89 residues: Small ribosomal subunit protein uS14 (89 aa).

It belongs to the universal ribosomal protein uS14 family. As to quaternary structure, part of the 30S ribosomal subunit. Contacts proteins S3 and S10.

Functionally, binds 16S rRNA, required for the assembly of 30S particles and may also be responsible for determining the conformation of the 16S rRNA at the A site. The polypeptide is Small ribosomal subunit protein uS14 (Chlorobium limicola (strain DSM 245 / NBRC 103803 / 6330)).